The chain runs to 227 residues: Cytochrome c oxidase subunit 2 (227 aa).

Residues 1–14 (MAHAAQVGLQDATS) are Mitochondrial intermembrane-facing. Residues 15-45 (PIMEELITFHDHALMIIFLICFLVLYALFLT) form a helical membrane-spanning segment. Residues 46 to 59 (LTTKLTSTNISDAQ) lie on the Mitochondrial matrix side of the membrane. Residues 60–87 (EMETIWTILPAIILVLIALPSLRILYMT) traverse the membrane as a helical segment. At 88-227 (DEINDPSFTI…IFEMGPVFAL (140 aa)) the chain is on the mitochondrial intermembrane side. H161, C196, E198, C200, H204, and M207 together coordinate Cu cation. A Mg(2+)-binding site is contributed by E198.

This sequence belongs to the cytochrome c oxidase subunit 2 family. Component of the cytochrome c oxidase (complex IV, CIV), a multisubunit enzyme composed of 14 subunits. The complex is composed of a catalytic core of 3 subunits MT-CO1, MT-CO2 and MT-CO3, encoded in the mitochondrial DNA, and 11 supernumerary subunits COX4I, COX5A, COX5B, COX6A, COX6B, COX6C, COX7A, COX7B, COX7C, COX8 and NDUFA4, which are encoded in the nuclear genome. The complex exists as a monomer or a dimer and forms supercomplexes (SCs) in the inner mitochondrial membrane with NADH-ubiquinone oxidoreductase (complex I, CI) and ubiquinol-cytochrome c oxidoreductase (cytochrome b-c1 complex, complex III, CIII), resulting in different assemblies (supercomplex SCI(1)III(2)IV(1) and megacomplex MCI(2)III(2)IV(2)). Found in a complex with TMEM177, COA6, COX18, COX20, SCO1 and SCO2. Interacts with TMEM177 in a COX20-dependent manner. Interacts with COX20. Interacts with COX16. The cofactor is Cu cation.

The protein resides in the mitochondrion inner membrane. It carries out the reaction 4 Fe(II)-[cytochrome c] + O2 + 8 H(+)(in) = 4 Fe(III)-[cytochrome c] + 2 H2O + 4 H(+)(out). Its function is as follows. Component of the cytochrome c oxidase, the last enzyme in the mitochondrial electron transport chain which drives oxidative phosphorylation. The respiratory chain contains 3 multisubunit complexes succinate dehydrogenase (complex II, CII), ubiquinol-cytochrome c oxidoreductase (cytochrome b-c1 complex, complex III, CIII) and cytochrome c oxidase (complex IV, CIV), that cooperate to transfer electrons derived from NADH and succinate to molecular oxygen, creating an electrochemical gradient over the inner membrane that drives transmembrane transport and the ATP synthase. Cytochrome c oxidase is the component of the respiratory chain that catalyzes the reduction of oxygen to water. Electrons originating from reduced cytochrome c in the intermembrane space (IMS) are transferred via the dinuclear copper A center (CU(A)) of subunit 2 and heme A of subunit 1 to the active site in subunit 1, a binuclear center (BNC) formed by heme A3 and copper B (CU(B)). The BNC reduces molecular oxygen to 2 water molecules using 4 electrons from cytochrome c in the IMS and 4 protons from the mitochondrial matrix. This is Cytochrome c oxidase subunit 2 (MT-CO2) from Gorilla gorilla gorilla (Western lowland gorilla).